A 631-amino-acid polypeptide reads, in one-letter code: Phosphomethylpyrimidine synthase (631 aa).

Residues N239, M268, Y297, H333, 353–355 (SRG), 394–397 (DGLR), and E433 each bind substrate. Residue H437 coordinates Zn(2+). Y460 contacts substrate. H501 is a Zn(2+) binding site. Residues C581, C584, and C589 each coordinate [4Fe-4S] cluster.

The protein belongs to the ThiC family. In terms of assembly, homodimer. [4Fe-4S] cluster serves as cofactor.

It catalyses the reaction 5-amino-1-(5-phospho-beta-D-ribosyl)imidazole + S-adenosyl-L-methionine = 4-amino-2-methyl-5-(phosphooxymethyl)pyrimidine + CO + 5'-deoxyadenosine + formate + L-methionine + 3 H(+). The protein operates within cofactor biosynthesis; thiamine diphosphate biosynthesis. Catalyzes the synthesis of the hydroxymethylpyrimidine phosphate (HMP-P) moiety of thiamine from aminoimidazole ribotide (AIR) in a radical S-adenosyl-L-methionine (SAM)-dependent reaction. The sequence is that of Phosphomethylpyrimidine synthase from Shigella sonnei (strain Ss046).